The chain runs to 261 residues: Aromatic peroxygenase (261 aa).

Position 36 (cysteine 36) interacts with heme. Asparagine 100, asparagine 137, asparagine 141, and asparagine 220 each carry an N-linked (GlcNAc...) asparagine glycan.

The protein belongs to the chloroperoxidase family. It depends on heme b as a cofactor. In terms of processing, N-glycosylated.

Its function is as follows. Aromatic peroxidase that oxidizes aryl alcohols into the corresponding aldehydes and then into the corresponding benzoic acids. Catalyzes the regioselective peroxide-dependent hydroxylation of naphthalene to 1-naphthol and to a far lesser extent 2-naphthol via a naphthalene 1,2-oxide intermediate. Halogenates phenol to 2-bromophenol and 4-bromophenol. Oxidizes the sulfur-containing heterocycle dibenzothiophene to yield sulfoxidation products, and trace amounts of ring-hydroxylation products. The sequence is that of Aromatic peroxygenase from Coprinellus radians (Coprophilous mushroom).